The sequence spans 244 residues: Venom nerve growth factor (244 aa).

A signal peptide spans 1–18 (MSMLCYTLIIAFLIGIWA). A propeptide spanning residues 19 to 125 (APKSEDNVSL…SLNRNIRAKR (107 aa)) is cleaved from the precursor. Intrachain disulfides connect Cys-139/Cys-204, Cys-182/Cys-232, and Cys-192/Cys-234. Asn-148 carries N-linked (GlcNAc...) asparagine glycosylation.

Belongs to the NGF-beta family. As to quaternary structure, homodimer; non-covalently linked. Post-translationally, N-glycosylated. Expressed by the venom gland.

The protein resides in the secreted. Functionally, nerve growth factor is important for the development and maintenance of the sympathetic and sensory nervous systems. It stimulates division and differentiation of sympathetic and embryonic sensory neurons as well as basal forebrain cholinergic neurons in the brain. Its relevance in the snake venom is not clear. However, it has been shown to inhibit metalloproteinase-dependent proteolysis of platelet glycoprotein Ib alpha, suggesting a metalloproteinase inhibition to prevent metalloprotease autodigestion and/or protection against prey proteases. Binds a lipid between the two protein chains in the homodimer. The lipid-bound form promotes histamine relase from mouse mast cells, contrary to the lipid-free form. It promotes neurite outgrowth in rat PC12 pheochromocytoma cells. The protein is Venom nerve growth factor of Macrovipera lebetinus (Levantine viper).